The primary structure comprises 766 residues: TBC1 domain family member 30 (766 aa).

Residues 87-295 (GIPKEWRRKV…KIWDSVFFEG (209 aa)) form the Rab-GAP TBC domain. Positions 380–406 (PTSVSGRHSKARDSDDENGPDDEDAVA) are disordered. The span at 393–404 (SDDENGPDDEDA) shows a compositional bias: acidic residues. The stretch at 422–491 (ELQKYQKQIK…YSRIKKKQQQ (70 aa)) forms a coiled coil. Disordered regions lie at residues 603–647 (SSLG…EPVF) and 731–766 (NLGL…TKKR). Phosphoserine is present on Ser642. The segment covering 751–766 (RGFNKSGIGNSSTKKR) has biased composition (polar residues).

The protein resides in the cell membrane. Functionally, may act as a GTPase-activating protein for Rab family protein(s). The protein is TBC1 domain family member 30 (Tbc1d30) of Mus musculus (Mouse).